A 360-amino-acid chain; its full sequence is Mediator of RNA polymerase II transcription subunit 6 (360 aa).

Disordered regions lie at residues 186–238 (PAQP…NDPL) and 316–360 (AAAA…PGAA). 2 stretches are compositionally biased toward low complexity: residues 190 to 205 (SAGAGAASGTTNYTAS) and 316 to 325 (AAAAAANANA).

This sequence belongs to the Mediator complex subunit 6 family. Component of the Mediator complex.

It is found in the nucleus. In terms of biological role, component of the Mediator complex, a coactivator involved in the regulated transcription of nearly all RNA polymerase II-dependent genes. Mediator functions as a bridge to convey information from gene-specific regulatory proteins to the basal RNA polymerase II transcription machinery. Mediator is recruited to promoters by direct interactions with regulatory proteins and serves as a scaffold for the assembly of a functional preinitiation complex with RNA polymerase II and the general transcription factors. This is Mediator of RNA polymerase II transcription subunit 6 (med-6) from Neurospora crassa (strain ATCC 24698 / 74-OR23-1A / CBS 708.71 / DSM 1257 / FGSC 987).